The primary structure comprises 125 residues: Large ribosomal subunit protein bL12 (125 aa).

The protein belongs to the bacterial ribosomal protein bL12 family. In terms of assembly, homodimer. Part of the ribosomal stalk of the 50S ribosomal subunit. Forms a multimeric L10(L12)X complex, where L10 forms an elongated spine to which 2 to 4 L12 dimers bind in a sequential fashion. Binds GTP-bound translation factors.

Forms part of the ribosomal stalk which helps the ribosome interact with GTP-bound translation factors. Is thus essential for accurate translation. In Polaromonas naphthalenivorans (strain CJ2), this protein is Large ribosomal subunit protein bL12.